The primary structure comprises 354 residues: Uroporphyrinogen decarboxylase (354 aa).

Substrate contacts are provided by residues 27 to 31, D77, Y154, T209, and H327; that span reads RQAGR.

It belongs to the uroporphyrinogen decarboxylase family. As to quaternary structure, homodimer.

The protein localises to the cytoplasm. The enzyme catalyses uroporphyrinogen III + 4 H(+) = coproporphyrinogen III + 4 CO2. It functions in the pathway porphyrin-containing compound metabolism; protoporphyrin-IX biosynthesis; coproporphyrinogen-III from 5-aminolevulinate: step 4/4. Functionally, catalyzes the decarboxylation of four acetate groups of uroporphyrinogen-III to yield coproporphyrinogen-III. This Klebsiella pneumoniae (strain 342) protein is Uroporphyrinogen decarboxylase.